Here is a 421-residue protein sequence, read N- to C-terminus: UDP-N-acetylglucosamine 1-carboxyvinyltransferase (421 aa).

26 to 27 (KN) is a phosphoenolpyruvate binding site. Position 96 (Arg-96) interacts with UDP-N-acetyl-alpha-D-glucosamine. Asp-120 serves as the catalytic Proton donor. UDP-N-acetyl-alpha-D-glucosamine contacts are provided by Asp-308 and Val-330.

This sequence belongs to the EPSP synthase family. MurA subfamily.

It localises to the cytoplasm. The catalysed reaction is phosphoenolpyruvate + UDP-N-acetyl-alpha-D-glucosamine = UDP-N-acetyl-3-O-(1-carboxyvinyl)-alpha-D-glucosamine + phosphate. It functions in the pathway cell wall biogenesis; peptidoglycan biosynthesis. Its function is as follows. Cell wall formation. Adds enolpyruvyl to UDP-N-acetylglucosamine. This is UDP-N-acetylglucosamine 1-carboxyvinyltransferase from Corynebacterium efficiens (strain DSM 44549 / YS-314 / AJ 12310 / JCM 11189 / NBRC 100395).